Reading from the N-terminus, the 150-residue chain is Large ribosomal subunit protein bL9 (150 aa).

Belongs to the bacterial ribosomal protein bL9 family.

Functionally, binds to the 23S rRNA. The sequence is that of Large ribosomal subunit protein bL9 from Buchnera aphidicola subsp. Acyrthosiphon pisum (strain 5A).